The following is a 232-amino-acid chain: Rhamnogalacturonan acetylesterase RhgT (232 aa).

The Nucleophile role is filled by S14. Active-site residues include E191 and H195.

It belongs to the 'GDSL' lipolytic enzyme family. In terms of assembly, monomer.

Almost completely inhibited by diethylpyrocarbonate at 5 mM and completely inhibited by phenylmethylsulfonyl fluoride (PMSF) at 50 mM. Dimethyl phosphite achieves only a 53% inhibition. Also inhibited by metal ions (magnesium, manganese and calcium) and chelating agent (EDTA) at the same level. Functionally, may play a role in the degradation of type I rhamnogalacturonan derived from plant cell walls. This enzyme has a broad substrate specificity, and shows strong preference for glucose pentaacetate, beta-naphthylacetate, and p-nitrophenyl acetate (pNPA). Also active toward acetylated xylan. This is Rhamnogalacturonan acetylesterase RhgT (rhgT) from Bacillus subtilis (strain 168).